A 156-amino-acid chain; its full sequence is MPRRREVAKRVILPDPKYADRVVAKLINIIMLDGKKSTAEKALYGAMEIAAGKAGEEPVKVLKKCLDNIKPMLEVKSRRVGGSTYQVPVEVRPERRVSLAMRWLVKYSNARSEKTVTDKLAGEILDAYNNRGSAVKKREDTHKMAEANRAFAHYRW.

The protein belongs to the universal ribosomal protein uS7 family. In terms of assembly, part of the 30S ribosomal subunit. Contacts proteins S9 and S11.

In terms of biological role, one of the primary rRNA binding proteins, it binds directly to 16S rRNA where it nucleates assembly of the head domain of the 30S subunit. Is located at the subunit interface close to the decoding center, probably blocks exit of the E-site tRNA. The sequence is that of Small ribosomal subunit protein uS7 from Geobacter sp. (strain M21).